Reading from the N-terminus, the 520-residue chain is GMP synthase [glutamine-hydrolyzing] (520 aa).

Positions 12–205 (KIIVLDYGSQ…AISICGGRGD (194 aa)) constitute a Glutamine amidotransferase type-1 domain. The active-site Nucleophile is cysteine 89. Residues histidine 179 and glutamate 181 contribute to the active site. Residues 206–395 (WSMDNFIDMQ…LGMPDEVVWR (190 aa)) enclose the GMPS ATP-PPase domain. Residue 233-239 (SGGVDSS) coordinates ATP.

As to quaternary structure, homodimer.

The enzyme catalyses XMP + L-glutamine + ATP + H2O = GMP + L-glutamate + AMP + diphosphate + 2 H(+). The protein operates within purine metabolism; GMP biosynthesis; GMP from XMP (L-Gln route): step 1/1. In terms of biological role, catalyzes the synthesis of GMP from XMP. This chain is GMP synthase [glutamine-hydrolyzing], found in Streptococcus equi subsp. equi (strain 4047).